Consider the following 533-residue polypeptide: Glucose-6-phosphate isomerase (533 aa).

Glu341 serves as the catalytic Proton donor. Residues His372 and Lys501 contribute to the active site.

This sequence belongs to the GPI family.

Its subcellular location is the cytoplasm. The catalysed reaction is alpha-D-glucose 6-phosphate = beta-D-fructose 6-phosphate. It participates in carbohydrate biosynthesis; gluconeogenesis. It functions in the pathway carbohydrate degradation; glycolysis; D-glyceraldehyde 3-phosphate and glycerone phosphate from D-glucose: step 2/4. Its function is as follows. Catalyzes the reversible isomerization of glucose-6-phosphate to fructose-6-phosphate. The polypeptide is Glucose-6-phosphate isomerase (Cereibacter sphaeroides (strain KD131 / KCTC 12085) (Rhodobacter sphaeroides)).